The following is a 229-amino-acid chain: Uracil-DNA glycosylase (229 aa).

The active-site Proton acceptor is D64.

This sequence belongs to the uracil-DNA glycosylase (UDG) superfamily. UNG family.

Its subcellular location is the cytoplasm. The catalysed reaction is Hydrolyzes single-stranded DNA or mismatched double-stranded DNA and polynucleotides, releasing free uracil.. In terms of biological role, excises uracil residues from the DNA which can arise as a result of misincorporation of dUMP residues by DNA polymerase or due to deamination of cytosine. The chain is Uracil-DNA glycosylase from Shigella flexneri serotype 5b (strain 8401).